A 119-amino-acid chain; its full sequence is Polyhedrin (119 aa).

It belongs to the polyhedrin family.

In terms of biological role, major component of the virus occlusion bodies, which are large proteinaceous structures (polyhedra), that protect the virus from the outside environment for extended periods until they are ingested by insect larvae. The protein is Polyhedrin (PH) of Antheraea pernyi nuclear polyhedrosis virus (ApNPV).